A 700-amino-acid polypeptide reads, in one-letter code: Elongation factor G (700 aa).

Positions 10–286 (KKVRNIGIMA…AVIDYLPSPL (277 aa)) constitute a tr-type G domain. GTP-binding positions include 19-26 (AHIDAGKT), 83-87 (DTPGH), and 137-140 (NKMD).

Belongs to the TRAFAC class translation factor GTPase superfamily. Classic translation factor GTPase family. EF-G/EF-2 subfamily.

It localises to the cytoplasm. Functionally, catalyzes the GTP-dependent ribosomal translocation step during translation elongation. During this step, the ribosome changes from the pre-translocational (PRE) to the post-translocational (POST) state as the newly formed A-site-bound peptidyl-tRNA and P-site-bound deacylated tRNA move to the P and E sites, respectively. Catalyzes the coordinated movement of the two tRNA molecules, the mRNA and conformational changes in the ribosome. This Nocardia farcinica (strain IFM 10152) protein is Elongation factor G.